Reading from the N-terminus, the 335-residue chain is Holliday junction branch migration complex subunit RuvB (335 aa).

The large ATPase domain (RuvB-L) stretch occupies residues 1–181 (MERIIEIEKM…FGMNFWMQFY (181 aa)). ATP-binding positions include Leu20, Arg21, Gly62, Lys65, Thr66, Thr67, 128–130 (EDF), Arg171, Tyr181, and Arg218. Thr66 contributes to the Mg(2+) binding site. The segment at 182–252 (NIEELSQIIT…QARYALHELG (71 aa)) is small ATPAse domain (RuvB-S). A head domain (RuvB-H) region spans residues 255–335 (DHGFDDLDLR…LPFEPNATLF (81 aa)). Positions 309 and 314 each coordinate DNA.

This sequence belongs to the RuvB family. In terms of assembly, homohexamer. Forms an RuvA(8)-RuvB(12)-Holliday junction (HJ) complex. HJ DNA is sandwiched between 2 RuvA tetramers; dsDNA enters through RuvA and exits via RuvB. An RuvB hexamer assembles on each DNA strand where it exits the tetramer. Each RuvB hexamer is contacted by two RuvA subunits (via domain III) on 2 adjacent RuvB subunits; this complex drives branch migration. In the full resolvosome a probable DNA-RuvA(4)-RuvB(12)-RuvC(2) complex forms which resolves the HJ.

Its subcellular location is the cytoplasm. It carries out the reaction ATP + H2O = ADP + phosphate + H(+). The RuvA-RuvB-RuvC complex processes Holliday junction (HJ) DNA during genetic recombination and DNA repair, while the RuvA-RuvB complex plays an important role in the rescue of blocked DNA replication forks via replication fork reversal (RFR). RuvA specifically binds to HJ cruciform DNA, conferring on it an open structure. The RuvB hexamer acts as an ATP-dependent pump, pulling dsDNA into and through the RuvAB complex. RuvB forms 2 homohexamers on either side of HJ DNA bound by 1 or 2 RuvA tetramers; 4 subunits per hexamer contact DNA at a time. Coordinated motions by a converter formed by DNA-disengaged RuvB subunits stimulates ATP hydrolysis and nucleotide exchange. Immobilization of the converter enables RuvB to convert the ATP-contained energy into a lever motion, pulling 2 nucleotides of DNA out of the RuvA tetramer per ATP hydrolyzed, thus driving DNA branch migration. The RuvB motors rotate together with the DNA substrate, which together with the progressing nucleotide cycle form the mechanistic basis for DNA recombination by continuous HJ branch migration. Branch migration allows RuvC to scan DNA until it finds its consensus sequence, where it cleaves and resolves cruciform DNA. In Wolinella succinogenes (strain ATCC 29543 / DSM 1740 / CCUG 13145 / JCM 31913 / LMG 7466 / NCTC 11488 / FDC 602W) (Vibrio succinogenes), this protein is Holliday junction branch migration complex subunit RuvB.